Here is a 208-residue protein sequence, read N- to C-terminus: Large ribosomal subunit protein uL3 (208 aa).

Glutamine 149 bears the N5-methylglutamine mark.

This sequence belongs to the universal ribosomal protein uL3 family. As to quaternary structure, part of the 50S ribosomal subunit. Forms a cluster with proteins L14 and L19. In terms of processing, methylated by PrmB.

Functionally, one of the primary rRNA binding proteins, it binds directly near the 3'-end of the 23S rRNA, where it nucleates assembly of the 50S subunit. The protein is Large ribosomal subunit protein uL3 of Haemophilus ducreyi (strain 35000HP / ATCC 700724).